The sequence spans 138 residues: Holo-[acyl-carrier-protein] synthase (138 aa).

Residues Asp8 and Glu56 each coordinate Mg(2+).

Belongs to the P-Pant transferase superfamily. AcpS family. Requires Mg(2+) as cofactor.

The protein localises to the cytoplasm. It catalyses the reaction apo-[ACP] + CoA = holo-[ACP] + adenosine 3',5'-bisphosphate + H(+). Transfers the 4'-phosphopantetheine moiety from coenzyme A to a Ser of acyl-carrier-protein. The chain is Holo-[acyl-carrier-protein] synthase from Clostridium novyi (strain NT).